A 299-amino-acid chain; its full sequence is Cytidine deaminase (299 aa).

CMP/dCMP-type deaminase domains lie at 56–176 (SKIE…FGPK) and 194–299 (LQGD…YIAV). Residue 97–99 (NQE) coordinates substrate. Residue His110 participates in Zn(2+) binding. Glu112 acts as the Proton donor in catalysis. Residues Cys137 and Cys140 each coordinate Zn(2+).

It belongs to the cytidine and deoxycytidylate deaminase family. As to quaternary structure, homodimer. Zn(2+) is required as a cofactor.

It catalyses the reaction cytidine + H2O + H(+) = uridine + NH4(+). It carries out the reaction 2'-deoxycytidine + H2O + H(+) = 2'-deoxyuridine + NH4(+). Functionally, this enzyme scavenges exogenous and endogenous cytidine and 2'-deoxycytidine for UMP synthesis. The chain is Cytidine deaminase from Haemophilus ducreyi (strain 35000HP / ATCC 700724).